The chain runs to 36 residues: Kappa-theraphotoxin-Pg1b (36 aa).

3 disulfide bridges follow: Cys-4–Cys-19, Cys-11–Cys-24, and Cys-18–Cys-31.

This sequence belongs to the neurotoxin 10 (Hwtx-1) family. 44 (Jztx-4) subfamily. As to expression, expressed by the venom gland.

Its subcellular location is the secreted. Functionally, gating modifier of Kv2.1/KCNB1, Kv2.2/KCNB2 and Kv4.3/KCND3 channels. The chain is Kappa-theraphotoxin-Pg1b from Chilobrachys guangxiensis (Chinese earth tiger tarantula).